Consider the following 358-residue polypeptide: Malate dehydrogenase 2, glyoxysomal (358 aa).

A glyoxysome-targeting transit peptide spans 1-38 (MEFRGDANKRIAMISAHLQPSFTPQMEAKNSVMGRENC). NAD(+) is bound by residues 53–59 (GAAGGIG) and Asp-79. The substrate site is built by Arg-126 and Arg-132. NAD(+)-binding positions include Asn-139 and 162 to 164 (ISN). Substrate is bound by residues Asn-164 and Arg-198. Catalysis depends on His-222, which acts as the Proton acceptor. Met-273 serves as a coordination point for NAD(+).

Belongs to the LDH/MDH superfamily. MDH type 1 family. As to quaternary structure, homodimer.

It localises to the glyoxysome. The enzyme catalyses (S)-malate + NAD(+) = oxaloacetate + NADH + H(+). The sequence is that of Malate dehydrogenase 2, glyoxysomal (MDH2) from Brassica napus (Rape).